The following is a 932-amino-acid chain: Protein translocase subunit SecA (932 aa).

Residues Q90, 108–112, and D498 contribute to the ATP site; that span reads GEGKT.

The protein belongs to the SecA family. Monomer and homodimer. Part of the essential Sec protein translocation apparatus which comprises SecA, SecYEG and auxiliary proteins SecDF. Other proteins may also be involved.

It localises to the cell inner membrane. It is found in the cellular thylakoid membrane. The protein resides in the cytoplasm. The catalysed reaction is ATP + H2O + cellular proteinSide 1 = ADP + phosphate + cellular proteinSide 2.. Functionally, part of the Sec protein translocase complex. Interacts with the SecYEG preprotein conducting channel. Has a central role in coupling the hydrolysis of ATP to the transfer of proteins into and across the cell membrane, serving as an ATP-driven molecular motor driving the stepwise translocation of polypeptide chains across the membrane. Its function is as follows. Probably participates in protein translocation into and across both the cytoplasmic and thylakoid membranes in cyanobacterial cells. This is Protein translocase subunit SecA from Synechocystis sp. (strain ATCC 27184 / PCC 6803 / Kazusa).